A 194-amino-acid polypeptide reads, in one-letter code: Cysteine and glycine-rich protein 3 (194 aa).

The segment at methionine 1–glycine 5 is interaction with TCAP. The LIM zinc-binding 1 domain occupies cysteine 10 to cysteine 61. The Nuclear localization signal signature appears at arginine 64–lysine 69. The tract at residues glutamine 94 to serine 105 is interaction with CLF2. 3 positions are modified to phosphoserine: serine 95, serine 111, and serine 153. The LIM zinc-binding 2 domain maps to cysteine 120 to cysteine 171.

Self-associates. Oligomeric in the cytoplasm and monomeric in the nucleus. Homooligomers preferentially form along the actin cytoskeleton. Interacts with TCAP, ACTN2 and NRAP. Interacts with LDHD, SPTB, MYOD1, MYOG, MYF6. Interacts with GLRX3 (via C-terminus); GLRX3 and calcineurin compete for interaction with CSRP3. Interacts with CFL2; the stoichiometry influences F-actin depolymerization and possibly two molecules of CFL2 can interact with one molecule of CSRP3 resulting in the highest functional impact; the interaction is stronger with phosphorylated CFL2. In terms of processing, phosphorylated by PKC/PRKCA. High in striated muscle and adult heart.

The protein localises to the nucleus. It is found in the cytoplasm. The protein resides in the cytoskeleton. Its subcellular location is the myofibril. It localises to the sarcomere. The protein localises to the z line. Positive regulator of myogenesis. Acts as a cofactor for myogenic bHLH transcription factors such as MYOD1, and probably MYOG and MYF6. Enhances the DNA-binding activity of the MYOD1:TCF3 isoform E47 complex and may promote formation of a functional MYOD1:TCF3 isoform E47:MEF2A complex involved in myogenesis. Plays a crucial and specific role in the organization of cytosolic structures in cardiomyocytes. Could play a role in mechanical stretch sensing. May be a scaffold protein that promotes the assembly of interacting proteins at Z-line structures. It is essential for calcineurin anchorage to the Z line. Required for stress-induced calcineurin-NFAT activation. The role in regulation of cytoskeleton dynamics by association with CFL2 is reported conflictingly. Proposed to contribute to the maintenance of muscle cell integrity through an actin-based mechanism. Can directly bind to actin filaments, cross-link actin filaments into bundles without polarity selectivity and protect them from dilution- and cofilin-mediated depolymerization; the function seems to involve its self-association. In vitro can inhibit PKC/PRKCA activity. Proposed to be involved in cardiac stress signaling by down-regulating excessive PKC/PRKCA signaling. The protein is Cysteine and glycine-rich protein 3 (Csrp3) of Rattus norvegicus (Rat).